The primary structure comprises 171 residues: NADH-quinone oxidoreductase subunit I 2 (171 aa).

2 consecutive 4Fe-4S ferredoxin-type domains span residues 39-71 and 81-110; these read IVLT…LSKA and EHFR…LTPD. [4Fe-4S] cluster is bound by residues C51, C54, C57, C61, C90, C93, C96, and C100.

This sequence belongs to the complex I 23 kDa subunit family. As to quaternary structure, NDH-1 is composed of 14 different subunits. Subunits NuoA, H, J, K, L, M, N constitute the membrane sector of the complex. [4Fe-4S] cluster is required as a cofactor.

The protein resides in the cell inner membrane. It catalyses the reaction a quinone + NADH + 5 H(+)(in) = a quinol + NAD(+) + 4 H(+)(out). Functionally, NDH-1 shuttles electrons from NADH, via FMN and iron-sulfur (Fe-S) centers, to quinones in the respiratory chain. The immediate electron acceptor for the enzyme in this species is believed to be ubiquinone. Couples the redox reaction to proton translocation (for every two electrons transferred, four hydrogen ions are translocated across the cytoplasmic membrane), and thus conserves the redox energy in a proton gradient. The chain is NADH-quinone oxidoreductase subunit I 2 from Rhodopseudomonas palustris (strain BisB18).